A 324-amino-acid chain; its full sequence is Polyprenol dehydrogenase (324 aa).

The active-site Proton acceptor is Tyr-206. Positions 206, 210, and 243 each coordinate NAD(+).

This sequence belongs to the short-chain dehydrogenases/reductases (SDR) family.

Its subcellular location is the lipid droplet. It carries out the reaction a di-trans,poly-cis-polyprenol + NAD(+) = a di-trans,poly-cis-polyprenal + NADH + H(+). The enzyme catalyses a di-trans,poly-cis-polyprenol + NADP(+) = a di-trans,poly-cis-polyprenal + NADPH + H(+). The catalysed reaction is a di-trans,poly-cis-dolichol + NADP(+) = a di-trans,poly-cis-dolichal + NADPH + H(+). It catalyses the reaction a di-trans,poly-cis-dolichol + NAD(+) = a di-trans,poly-cis-dolichal + NADH + H(+). The protein operates within protein modification; protein glycosylation. Its function is as follows. Oxidoreductase that plays a key role in early steps of protein N-linked glycosylation by mediating two non-consecutive steps in dolichol biosynthesis. Acts both as a NAD(+)-dependent dehydrogenase and as a NADPH-dependent reductase during the conversion of polyprenol into dolichol. First catalyzes the NAD(+)-dependent dehydrogenation of polyprenol into polyprenal; polyprenal is then reduced into dolichal by srd5a3. It then catalyzes the NADPH-dependent reduction of dolichal into dolichol. The protein is Polyprenol dehydrogenase of Danio rerio (Zebrafish).